The chain runs to 2148 residues: Polyketide synthase 1 (2148 aa).

Residues 19 to 261 (FIFGDQSSCN…TPLAVHAPYH (243 aa)) form an N-terminal acylcarrier protein transacylase domain (SAT) region. A Ketosynthase family 3 (KS3) domain is found at 394–829 (ESKIAIIGMS…GGNTALLVED (436 aa)). Catalysis depends on for beta-ketoacyl synthase activity residues Cys566, His701, and His745. Residues 929 to 1233 (AFVFSGQGSQ…PSLMRNKDGW (305 aa)) form a malonyl-CoA:ACP transacylase (MAT) domain region. Ser1018 (for acyl/malonyl transferase activity) is an active-site residue. The segment at 1310 to 1624 (TASVHRIVHE…RKVLNTAMPP (315 aa)) is product template (PT) domain. Residues 1314–1447 (HRIVHESVDK…SSLHFEQPKV (134 aa)) are N-terminal hotdog fold. The 306-residue stretch at 1314 to 1619 (HRIVHESVDK…FQGIPRKVLN (306 aa)) folds into the PKS/mFAS DH domain. His1346 acts as the Proton acceptor; for dehydratase activity in catalysis. The segment at 1474-1619 (LNSRMSSGVI…FQGIPRKVLN (146 aa)) is C-terminal hotdog fold. The Proton donor; for dehydratase activity role is filled by Asp1533. Residues 1619 to 1657 (NTAMPPPKSQNEAPVRSAPAKPAAKPPKSASSEHSGHFA) are disordered. Residues 1635-1650 (SAPAKPAAKPPKSASS) are compositionally biased toward low complexity. Residues 1678 to 1752 (RNPMLAVFKI…DLATHLGLDT (75 aa)) form the Carrier 1 domain. Residue Ser1712 is modified to O-(pantetheine 4'-phosphoryl)serine. A compositionally biased stretch (low complexity) spans 1755 to 1790 (SDQSSGQSSSSGGLSPRSDSIGEITSSATTPPSLSP). The disordered stretch occupies residues 1755-1796 (SDQSSGQSSSSGGLSPRSDSIGEITSSATTPPSLSPRGSVSG). One can recognise a Carrier 2 domain in the interval 1793-1870 (SVSGSQCKDV…SFKHMFQQGH (78 aa)). Ser1830 carries the O-(pantetheine 4'-phosphoryl)serine modification. Positions 1882–2146 (LKQYRATSTL…ERVAAFIRST (265 aa)) are thioesterase (TE) domain. The For thioesterase activity role is filled by Ser1973.

Polyketide synthase; part of the Pks1 gene cluster that mediates the biosynthesis of an anthraquinone derivative pigment that contributes to conidial pigmentation that provides protection from UV radiation, heat and cold stress. The polyketide synthase Pks1 produces 1-acetyl-2,4,6,8-tetrahydroxy-9,10-anthraquinone though condensation of acetyl-CoA with malonyl-CoA. The dehydratase EthD and the laccase Mlac1 further convert the anthraquinone derivative into the final conidial pigment. The protein is Polyketide synthase 1 of Metarhizium guizhouense (strain ARSEF 977).